The chain runs to 318 residues: DNA repair nuclease/redox regulator APEX1 (318 aa).

A disordered region spans residues 1 to 59 (MPKRGKKGAVVEDAEEPKTEPEAKKSKAGAKKNEKEAVGEGAVLYEDPPDQKTSPSGKS). The interval 2–33 (PKRGKKGAVVEDAEEPKTEPEAKKSKAGAKKN) is necessary for interaction with YBX1, binding to RNA, association together with NPM1 to rRNA, endoribonuclease activity on abasic RNA and localization in the nucleoli. An N6-acetyllysine; by EP300 mark is found at Lys6 and Lys7. Residues 8–13 (GAVVED) carry the Nuclear localization signal (NLS) motif. Over residues 16 to 38 (EPKTEPEAKKSKAGAKKNEKEAV) the composition is skewed to basic and acidic residues. The tract at residues 23 to 33 (AKKSKAGAKKN) is necessary for interaction with NPM1 and for efficient rRNA binding. Lys27, Lys31, Lys32, and Lys35 each carry N6-acetyllysine. At Ser54 the chain carries Phosphoserine. The Nuclear export signal (NES) motif lies at 64–80 (ICSWNVDGLRAWIKKKG). The residue at position 65 (Cys65) is an S-nitrosocysteine; alternate. A disulfide bridge connects residues Cys65 and Cys93. Asp70 is a binding site for Mg(2+). The residue at position 93 (Cys93) is an S-nitrosocysteine; alternate. A Mg(2+)-binding site is contributed by Glu96. Tyr171 is an active-site residue. The residue at position 197 (Lys197) is an N6-acetyllysine. Mg(2+) is bound by residues Asp210 and Asn212. The Proton donor/acceptor role is filled by Asp210. Position 233 is a phosphothreonine; by CDK5 (Thr233). The mitochondrial targeting sequence (MTS) stretch occupies residues 289–318 (QSVLPALCDSKIRSKALGSDHCPITLYLAL). Asp308 is a Mg(2+) binding site. Cys310 bears the S-nitrosocysteine mark.

This sequence belongs to the DNA repair enzymes AP/ExoA family. Monomer. Homodimer; disulfide-linked. Component of the SET complex, composed of at least APEX1, SET, ANP32A, HMGB2, NME1 and TREX1. Associates with the dimer XRCC5/XRCC6 in a DNA-dependent manner. Interacts with SIRT1; the interaction is increased in the context of genotoxic stress. Interacts with HDAC1, HDAC2 and HDAC3; the interactions are not dependent on the APEX1 acetylation status. Interacts with XRCC1; the interaction is induced by SIRT1 and increased with the APEX1 acetylated form. Interacts with NPM1 (via N-terminal domain); the interaction is RNA-dependent and decreases in hydrogen peroxide-damaged cells. Interacts (via N-terminus) with YBX1 (via C-terminus); the interaction is increased in presence of APEX1 acetylated at Lys-6 and Lys-7. Interacts with HNRNPL; the interaction is DNA-dependent. Interacts (via N-terminus) with KPNA1 and KPNA2. Interacts with TXN; the interaction stimulates the FOS/JUN AP-1 complex DNA-binding activity in a redox-dependent manner. Interacts with GZMA, KRT8, MDM2, POLB, PRDX6, PRPF19, RPLP0, TOMM20 and WDR77. Binds to CDK5. The cofactor is Mg(2+). It depends on Mn(2+) as a cofactor. Post-translationally, phosphorylated. Phosphorylation by kinase PKC or casein kinase CK2 results in enhanced redox activity that stimulates binding of the FOS/JUN AP-1 complex to its cognate binding site. AP-endodeoxyribonuclease activity is not affected by CK2-mediated phosphorylation. Phosphorylation of Thr-233 by CDK5 in response to MPP(+)/MPTP (1-methyl-4-phenylpyridinium) reduces AP-endodeoxyribonuclease activity resulting in accumulation of DNA damage and contributing to neuronal death. Acetylated on Lys-6 and Lys-7. Acetylation is increased by the transcriptional coactivator EP300 acetyltransferase, genotoxic agents like H(2)O(2) and methyl methanesulfonate (MMS). Acetylation increases its binding affinity to the negative calcium response element (nCaRE) DNA promoter. The acetylated form induces a stronger binding of YBX1 to the Y-box sequence in the MDR1 promoter than the unacetylated form. Deacetylated on lysines. Lys-6 and Lys-7 are deacetylated by SIRT1. In terms of processing, cleaved at Lys-31 by granzyme A to create the mitochondrial form; leading in reduction of binding to DNA, AP endodeoxyribonuclease activity, redox activation of transcription factors and to enhanced cell death. Cleaved by granzyme K; leading to intracellular ROS accumulation and enhanced cell death after oxidative stress. Post-translationally, cys-69 and Cys-93 are nitrosylated in response to nitric oxide (NO) and lead to the exposure of the nuclear export signal (NES). Ubiquitinated by MDM2; leading to translocation to the cytoplasm and proteasomal degradation. In terms of tissue distribution, the mitochondrial form is expressed in liver (at protein level). Thymus.

Its subcellular location is the nucleus. The protein resides in the nucleolus. It localises to the nucleus speckle. The protein localises to the endoplasmic reticulum. It is found in the cytoplasm. Its subcellular location is the mitochondrion. It carries out the reaction Exonucleolytic cleavage in the 3'- to 5'-direction to yield nucleoside 5'-phosphates.. With respect to regulation, NPM1 stimulates endodeoxyribonuclease activity on double-stranded DNA with AP sites, but inhibits endoribonuclease activity on single-stranded RNA containing AP sites. Functionally, multifunctional protein that plays a central role in the cellular response to oxidative stress. The two major activities of APEX1 are DNA repair and redox regulation of transcriptional factors. Functions as an apurinic/apyrimidinic (AP) endodeoxyribonuclease in the DNA base excision repair (BER) pathway of DNA lesions induced by oxidative and alkylating agents. Initiates repair of AP sites in DNA by catalyzing hydrolytic incision of the phosphodiester backbone immediately adjacent to the damage, generating a single-strand break with 5'-deoxyribose phosphate and 3'-hydroxyl ends. Also incises at AP sites in the DNA strand of DNA/RNA hybrids, single-stranded DNA regions of R-loop structures, and single-stranded RNA molecules. Has 3'-5' exoribonuclease activity on mismatched deoxyribonucleotides at the 3' termini of nicked or gapped DNA molecules during short-patch BER. Possesses DNA 3' phosphodiesterase activity capable of removing lesions (such as phosphoglycolate) blocking the 3' side of DNA strand breaks. May also play a role in the epigenetic regulation of gene expression by participating in DNA demethylation. Acts as a loading factor for POLB onto non-incised AP sites in DNA and stimulates the 5'-terminal deoxyribose 5'-phosphate (dRp) excision activity of POLB. Plays a role in the protection from granzyme-mediated cellular repair leading to cell death. Also involved in the DNA cleavage step of class switch recombination (CSR). On the other hand, APEX1 also exerts reversible nuclear redox activity to regulate DNA binding affinity and transcriptional activity of transcriptional factors by controlling the redox status of their DNA-binding domain, such as the FOS/JUN AP-1 complex after exposure to IR. Involved in calcium-dependent down-regulation of parathyroid hormone (PTH) expression by binding to negative calcium response elements (nCaREs). Together with HNRNPL or the dimer XRCC5/XRCC6, associates with nCaRE, acting as an activator of transcriptional repression. Stimulates the YBX1-mediated MDR1 promoter activity, when acetylated at Lys-6 and Lys-7, leading to drug resistance. Also acts as an endoribonuclease involved in the control of single-stranded RNA metabolism. Plays a role in regulating MYC mRNA turnover by preferentially cleaving in between UA and CA dinucleotides of the MYC coding region determinant (CRD). In association with NMD1, plays a role in the rRNA quality control process during cell cycle progression. Associates, together with YBX1, on the MDR1 promoter. Together with NPM1, associates with rRNA. Binds DNA and RNA. The polypeptide is DNA repair nuclease/redox regulator APEX1 (APEX1) (Bos taurus (Bovine)).